The sequence spans 205 residues: Probable thymidylate kinase (205 aa).

7–14 (GIDGSGKS) contributes to the ATP binding site.

The protein belongs to the thymidylate kinase family.

The catalysed reaction is dTMP + ATP = dTDP + ADP. This Methanoculleus marisnigri (strain ATCC 35101 / DSM 1498 / JR1) protein is Probable thymidylate kinase.